The sequence spans 329 residues: Protoheme IX farnesyltransferase (329 aa).

Helical transmembrane passes span L61 to L81, A108 to N128, L130 to L150, I158 to G178, W186 to L206, L243 to F263, and A284 to L304.

Belongs to the UbiA prenyltransferase family. Protoheme IX farnesyltransferase subfamily.

It is found in the cell inner membrane. The enzyme catalyses heme b + (2E,6E)-farnesyl diphosphate + H2O = Fe(II)-heme o + diphosphate. It functions in the pathway porphyrin-containing compound metabolism; heme O biosynthesis; heme O from protoheme: step 1/1. In terms of biological role, converts heme B (protoheme IX) to heme O by substitution of the vinyl group on carbon 2 of heme B porphyrin ring with a hydroxyethyl farnesyl side group. The chain is Protoheme IX farnesyltransferase from Synechococcus sp. (strain RCC307).